The sequence spans 352 residues: Photosystem II D2 protein (352 aa).

The residue at position 2 (T2) is an N-acetylthreonine. T2 bears the Phosphothreonine mark. Residues 40-60 (CAYFALGGWLTGTTFVTSWYT) traverse the membrane as a helical segment. H117 is a chlorophyll a binding site. A helical membrane pass occupies residues 124–140 (GFMLRQFEIARSVNLRP). The pheophytin a site is built by Q129 and N142. A helical transmembrane segment spans residues 152–165 (VFVSVFLIYPLGQS). A chlorophyll a-binding site is contributed by H197. A helical transmembrane segment spans residues 207-227 (AALLCAIHGATVENTLFEDGD). H214 and F261 together coordinate a plastoquinone. H214 contributes to the Fe cation binding site. H268 lines the Fe cation pocket. Residues 278–294 (GLWMSAIGVVGLALNLR) traverse the membrane as a helical segment.

Belongs to the reaction center PufL/M/PsbA/D family. PSII is composed of 1 copy each of membrane proteins PsbA, PsbB, PsbC, PsbD, PsbE, PsbF, PsbH, PsbI, PsbJ, PsbK, PsbL, PsbM, PsbT, PsbX, PsbY, PsbZ, Psb30/Ycf12, at least 3 peripheral proteins of the oxygen-evolving complex and a large number of cofactors. It forms dimeric complexes. Requires The D1/D2 heterodimer binds P680, chlorophylls that are the primary electron donor of PSII, and subsequent electron acceptors. It shares a non-heme iron and each subunit binds pheophytin, quinone, additional chlorophylls, carotenoids and lipids. There is also a Cl(-1) ion associated with D1 and D2, which is required for oxygen evolution. The PSII complex binds additional chlorophylls, carotenoids and specific lipids. as cofactor. Post-translationally, phosphorylated in vitro.

The protein resides in the plastid. It localises to the chloroplast thylakoid membrane. The enzyme catalyses 2 a plastoquinone + 4 hnu + 2 H2O = 2 a plastoquinol + O2. Functionally, photosystem II (PSII) is a light-driven water:plastoquinone oxidoreductase that uses light energy to abstract electrons from H(2)O, generating O(2) and a proton gradient subsequently used for ATP formation. It consists of a core antenna complex that captures photons, and an electron transfer chain that converts photonic excitation into a charge separation. The D1/D2 (PsbA/PsbD) reaction center heterodimer binds P680, the primary electron donor of PSII as well as several subsequent electron acceptors. D2 is needed for assembly of a stable PSII complex. In Chlamydomonas reinhardtii (Chlamydomonas smithii), this protein is Photosystem II D2 protein.